Here is a 432-residue protein sequence, read N- to C-terminus: Adenosylhomocysteinase (432 aa).

The segment at 1–24 (MSAYSPLSAQLDADTDVDVESTRT) is disordered. Substrate-binding residues include Asp-137 and Glu-162. 163–165 (TTT) is a binding site for NAD(+). Lys-192 and Asp-196 together coordinate substrate. NAD(+) is bound by residues Asn-197, 226 to 231 (GYGYCG), Glu-249, Asn-284, 305 to 307 (AGH), and Asn-352.

Belongs to the adenosylhomocysteinase family. NAD(+) serves as cofactor.

It localises to the cytoplasm. The enzyme catalyses S-adenosyl-L-homocysteine + H2O = L-homocysteine + adenosine. It functions in the pathway amino-acid biosynthesis; L-homocysteine biosynthesis; L-homocysteine from S-adenosyl-L-homocysteine: step 1/1. In terms of biological role, may play a key role in the regulation of the intracellular concentration of adenosylhomocysteine. The chain is Adenosylhomocysteinase from Haloquadratum walsbyi (strain DSM 16790 / HBSQ001).